A 132-amino-acid polypeptide reads, in one-letter code: Small ribosomal subunit protein eS6 (132 aa).

Belongs to the eukaryotic ribosomal protein eS6 family.

The sequence is that of Small ribosomal subunit protein eS6 from Methanoculleus marisnigri (strain ATCC 35101 / DSM 1498 / JR1).